An 881-amino-acid chain; its full sequence is Valine--tRNA ligase (881 aa).

Positions Pro-49 to His-59 match the 'HIGH' region motif. The 'KMSKS' region signature appears at Lys-526–Ser-530. Lys-529 contacts ATP. Positions Leu-810 to Lys-881 form a coiled coil.

Belongs to the class-I aminoacyl-tRNA synthetase family. ValS type 1 subfamily. As to quaternary structure, monomer.

The protein localises to the cytoplasm. It carries out the reaction tRNA(Val) + L-valine + ATP = L-valyl-tRNA(Val) + AMP + diphosphate. Functionally, catalyzes the attachment of valine to tRNA(Val). As ValRS can inadvertently accommodate and process structurally similar amino acids such as threonine, to avoid such errors, it has a 'posttransfer' editing activity that hydrolyzes mischarged Thr-tRNA(Val) in a tRNA-dependent manner. The chain is Valine--tRNA ligase from Bacillus cereus (strain ATCC 14579 / DSM 31 / CCUG 7414 / JCM 2152 / NBRC 15305 / NCIMB 9373 / NCTC 2599 / NRRL B-3711).